The chain runs to 511 residues: Glutamate/gamma-aminobutyrate antiporter (511 aa).

Residues 1–13 lie on the Cytoplasmic side of the membrane; the sequence is MATSVQTGKAKQL. The chain crosses the membrane as a helical span at residues 14–36; that stretch reads TLLGFFAITASMVMAVYEYPTFA. Over 37 to 40 the chain is Periplasmic; sequence TSGF. The chain crosses the membrane as a helical span at residues 41–64; it reads SLVFFLLLGGILWFIPVGLCAAEM. At 65–85 the chain is on the cytoplasmic side; that stretch reads ATVDGWEEGGVFAWVSNTLGP. Residues 86 to 112 traverse the membrane as a helical segment; sequence RWGFAAISFGYLQIAIGFIPMLYFVLG. Topologically, residues 113–126 are periplasmic; that stretch reads ALSYILKWPALNED. Residues 127 to 147 traverse the membrane as a helical segment; that stretch reads PITKTIAALIILWALALTQFG. Over 148–151 the chain is Cytoplasmic; that stretch reads GTKY. A helical transmembrane segment spans residues 152-180; the sequence is TARIAKVGFFAGILLPAFILIALAAIYLH. The Periplasmic segment spans residues 181 to 201; it reads SGAPVAIEMDSKTFFPDFSKV. A helical membrane pass occupies residues 202–225; it reads GTLVVFVAFILSYMGVEASATHVN. At 226–229 the chain is on the cytoplasmic side; sequence EMSN. Residues 230 to 259 form a helical membrane-spanning segment; that stretch reads PGRDYPLAMLLLMVAAICLSSVGGLSIAMV. Residues 260–288 lie on the Periplasmic side of the membrane; the sequence is IPGNEINLSAGVMQTFTVLMSHVAPEIEW. The chain crosses the membrane as a helical span at residues 289 to 322; the sequence is TVRVISALLLLGVLAEIASWIVGPSRGMYVTAQK. Over 323–337 the chain is Cytoplasmic; the sequence is NLLPAAFAKMNKNGV. A helical transmembrane segment spans residues 338–359; sequence PVTLVISQLVITSIALIILTNT. Residues 360-362 are Periplasmic-facing; sequence GGG. The helical transmembrane segment at 363–396 threads the bilayer; the sequence is NNMSFLIALALTVVIYLCAYFMLFIGYIVLVLKH. Topologically, residues 397 to 409 are cytoplasmic; that stretch reads PDLKRTFNIPGGK. A helical transmembrane segment spans residues 410 to 430; it reads GVKLVVAIVGLLTSIMAFIVS. Over 431–443 the chain is Periplasmic; the sequence is FLPPDNIQGDSTD. A helical transmembrane segment spans residues 444 to 467; sequence MYVELLVVSFLVVLALPFILYAVH. Topologically, residues 468–511 are cytoplasmic; it reads DRKGKANTGVTLEPINSQNAPKGHFFLHPRARSPHYIVMNDKKH.

This sequence belongs to the amino acid-polyamine-organocation (APC) superfamily. Glutamate:GABA antiporter (GGA) (TC 2.A.3.7) family. As to quaternary structure, monomer.

Its subcellular location is the cell inner membrane. The catalysed reaction is 4-aminobutanoate(in) + L-glutamate(out) = 4-aminobutanoate(out) + L-glutamate(in). Shows pH-dependent activity. The Glu/GABA transport activity is robust at pH 4.5 and rapidly decreases with increasing pH, with no detectable activity at pH 6.5 or above. The Glu analog L-trans-pyrrolidine-2,4-dicarboxylic acid (L-PDC) blocks the uptake of glutamate by selective inhibition. In terms of biological role, involved in glutaminase-dependent acid resistance. Exchanges extracellular glutamate (Glu) for intracellular gamma-aminobutyric acid (GABA) under acidic conditions. The protonation states of substrates are crucial for transport. Selectively transports Glu with no net charge and GABA with a positive charge. Also efficiently transports glutamine and, to a smaller extent, methionine and leucine. When the extracellular pH drops below 2.5, can import L-glutamine and export either glutamate or GABA. The ability to survive the extremely acidic conditions of the stomach is essential for successful colonization of the host by commensal and pathogenic bacteria. The sequence is that of Glutamate/gamma-aminobutyrate antiporter from Escherichia coli (strain K12).